The following is a 286-amino-acid chain: MENSCADAEFMVATPDTTADVLTIAGRSFRSRLMTGTGKYRSFEQMRASIAASGCEIVTVAVRRVQTNAPGHEGLAEALDWQKIWMLPNTAGCATAEEAIRVARLGREMAKLLGQEDNNFVKLEVIPDSRYLLPDPIGTLQAAEQLVKEGFAVLPYINADPLLAKRLEEVGCATVMPLGSPIGSGQGIRNEANIRIIVENAKVPVVVDAGIGTASEAAQAMELGADALLINTAIAQAEDPARMAQAMAMATIAGRLAFQAGRIPTRSAAIASSPQTGLVGQSPATV.

Lys122 acts as the Schiff-base intermediate with DXP in catalysis. 1-deoxy-D-xylulose 5-phosphate contacts are provided by residues Gly183, 209–210 (AG), and 231–232 (NT).

Belongs to the ThiG family. Homotetramer. Forms heterodimers with either ThiH or ThiS.

The protein localises to the cytoplasm. It catalyses the reaction [ThiS sulfur-carrier protein]-C-terminal-Gly-aminoethanethioate + 2-iminoacetate + 1-deoxy-D-xylulose 5-phosphate = [ThiS sulfur-carrier protein]-C-terminal Gly-Gly + 2-[(2R,5Z)-2-carboxy-4-methylthiazol-5(2H)-ylidene]ethyl phosphate + 2 H2O + H(+). It participates in cofactor biosynthesis; thiamine diphosphate biosynthesis. In terms of biological role, catalyzes the rearrangement of 1-deoxy-D-xylulose 5-phosphate (DXP) to produce the thiazole phosphate moiety of thiamine. Sulfur is provided by the thiocarboxylate moiety of the carrier protein ThiS. In vitro, sulfur can be provided by H(2)S. The protein is Thiazole synthase of Synechococcus elongatus (strain ATCC 33912 / PCC 7942 / FACHB-805) (Anacystis nidulans R2).